Consider the following 239-residue polypeptide: Orotidine 5'-phosphate decarboxylase (239 aa).

Substrate is bound by residues Asp-11, Lys-33, 60–69 (DLKCHDIPTT), Thr-123, Arg-185, Gln-194, Gly-214, and Arg-215. Lys-62 functions as the Proton donor in the catalytic mechanism.

Belongs to the OMP decarboxylase family. Type 1 subfamily. Homodimer.

It carries out the reaction orotidine 5'-phosphate + H(+) = UMP + CO2. The protein operates within pyrimidine metabolism; UMP biosynthesis via de novo pathway; UMP from orotate: step 2/2. In terms of biological role, catalyzes the decarboxylation of orotidine 5'-monophosphate (OMP) to uridine 5'-monophosphate (UMP). This is Orotidine 5'-phosphate decarboxylase from Bacillus licheniformis (strain ATCC 14580 / DSM 13 / JCM 2505 / CCUG 7422 / NBRC 12200 / NCIMB 9375 / NCTC 10341 / NRRL NRS-1264 / Gibson 46).